Reading from the N-terminus, the 353-residue chain is UDP-N-acetylglucosamine--N-acetylmuramyl-(pentapeptide) pyrophosphoryl-undecaprenol N-acetylglucosamine transferase (353 aa).

Residues 10-12 (TGG), Asn-124, Ser-183, and Gln-283 each bind UDP-N-acetyl-alpha-D-glucosamine.

This sequence belongs to the glycosyltransferase 28 family. MurG subfamily.

It localises to the cell inner membrane. The enzyme catalyses di-trans,octa-cis-undecaprenyl diphospho-N-acetyl-alpha-D-muramoyl-L-alanyl-D-glutamyl-meso-2,6-diaminopimeloyl-D-alanyl-D-alanine + UDP-N-acetyl-alpha-D-glucosamine = di-trans,octa-cis-undecaprenyl diphospho-[N-acetyl-alpha-D-glucosaminyl-(1-&gt;4)]-N-acetyl-alpha-D-muramoyl-L-alanyl-D-glutamyl-meso-2,6-diaminopimeloyl-D-alanyl-D-alanine + UDP + H(+). Its pathway is cell wall biogenesis; peptidoglycan biosynthesis. Functionally, cell wall formation. Catalyzes the transfer of a GlcNAc subunit on undecaprenyl-pyrophosphoryl-MurNAc-pentapeptide (lipid intermediate I) to form undecaprenyl-pyrophosphoryl-MurNAc-(pentapeptide)GlcNAc (lipid intermediate II). This is UDP-N-acetylglucosamine--N-acetylmuramyl-(pentapeptide) pyrophosphoryl-undecaprenol N-acetylglucosamine transferase from Helicobacter pylori (strain J99 / ATCC 700824) (Campylobacter pylori J99).